A 635-amino-acid chain; its full sequence is 3-dehydroshikimate dehydratase (635 aa).

Residues glutamate 134, aspartate 165, glutamine 191, and glutamate 239 each contribute to the a divalent metal cation site. VOC domains are found at residues 295–414 (GVEF…LVEQ) and 440–590 (RIDH…VYTE). Mg(2+) is bound by residues histidine 443, histidine 521, and glutamate 599.

The protein belongs to the bacterial two-domain DSD family. Homodimer. It depends on Co(2+) as a cofactor. The cofactor is Ni(2+). Mg(2+) is required as a cofactor. Requires Mn(2+) as cofactor.

The catalysed reaction is 3-dehydroshikimate = 3,4-dihydroxybenzoate + H2O. Its pathway is aromatic compound metabolism; 3,4-dihydroxybenzoate biosynthesis. Functionally, catalyzes the conversion of 3-dehydroshikimate to protocatechuate (3,4-dihydroxybenzoate), a common intermediate of quinate and shikimate degradation pathways. This Pseudomonas putida (strain ATCC 47054 / DSM 6125 / CFBP 8728 / NCIMB 11950 / KT2440) protein is 3-dehydroshikimate dehydratase.